Reading from the N-terminus, the 347-residue chain is GMP reductase (347 aa).

108–131 lines the NADP(+) pocket; sequence TDFEKTKQILIANPALNFLCIDVA. Gly181 and Gly183 together coordinate K(+). Cys186 serves as the catalytic Thioimidate intermediate. 216–239 contacts NADP(+); sequence IISDGGCTMPGDVAKAFGGGADFV.

It belongs to the IMPDH/GMPR family. GuaC type 1 subfamily. As to quaternary structure, homotetramer.

The catalysed reaction is IMP + NH4(+) + NADP(+) = GMP + NADPH + 2 H(+). Functionally, catalyzes the irreversible NADPH-dependent deamination of GMP to IMP. It functions in the conversion of nucleobase, nucleoside and nucleotide derivatives of G to A nucleotides, and in maintaining the intracellular balance of A and G nucleotides. The chain is GMP reductase from Enterobacter sp. (strain 638).